A 155-amino-acid polypeptide reads, in one-letter code: MTILSLSRFMLAGVLLASFNASAIPGFWQQGYGQGNTEYSVTEASGKTFTINCTGNPDQNGFYQHSVFLTLADDKMVSSHDDDTTITVVMDHQQYIIPSSLGWRNGDNAWFDFISNISEAGQFDVYVNDHKAGTFTADRKNAEKVLSTLGDCSND.

A signal peptide spans 1–23 (MTILSLSRFMLAGVLLASFNASA).

It to E.coli YfjT.

This is an uncharacterized protein from Escherichia coli (strain K12).